The chain runs to 333 residues: Holliday junction branch migration complex subunit RuvB (333 aa).

The segment at 1 to 181 is large ATPase domain (RuvB-L); it reads MNDILNKEPM…FGISSHMEYY (181 aa). Residues Leu20, Arg21, Gly62, Lys65, Thr66, Thr67, 128-130, Arg171, Tyr181, and Arg218 each bind ATP; that span reads EDF. Thr66 contacts Mg(2+). The small ATPAse domain (RuvB-S) stretch occupies residues 182–252; sequence QERDLEEIVK…ITDKALSILD (71 aa). The tract at residues 255–333 is head domain (RuvB-H); it reads AAGLDYIDQK…HLGYVYNEED (79 aa). Positions 291, 310, and 315 each coordinate DNA.

This sequence belongs to the RuvB family. Homohexamer. Forms an RuvA(8)-RuvB(12)-Holliday junction (HJ) complex. HJ DNA is sandwiched between 2 RuvA tetramers; dsDNA enters through RuvA and exits via RuvB. An RuvB hexamer assembles on each DNA strand where it exits the tetramer. Each RuvB hexamer is contacted by two RuvA subunits (via domain III) on 2 adjacent RuvB subunits; this complex drives branch migration. In the full resolvosome a probable DNA-RuvA(4)-RuvB(12)-RuvC(2) complex forms which resolves the HJ.

Its subcellular location is the cytoplasm. It catalyses the reaction ATP + H2O = ADP + phosphate + H(+). The RuvA-RuvB-RuvC complex processes Holliday junction (HJ) DNA during genetic recombination and DNA repair, while the RuvA-RuvB complex plays an important role in the rescue of blocked DNA replication forks via replication fork reversal (RFR). RuvA specifically binds to HJ cruciform DNA, conferring on it an open structure. The RuvB hexamer acts as an ATP-dependent pump, pulling dsDNA into and through the RuvAB complex. RuvB forms 2 homohexamers on either side of HJ DNA bound by 1 or 2 RuvA tetramers; 4 subunits per hexamer contact DNA at a time. Coordinated motions by a converter formed by DNA-disengaged RuvB subunits stimulates ATP hydrolysis and nucleotide exchange. Immobilization of the converter enables RuvB to convert the ATP-contained energy into a lever motion, pulling 2 nucleotides of DNA out of the RuvA tetramer per ATP hydrolyzed, thus driving DNA branch migration. The RuvB motors rotate together with the DNA substrate, which together with the progressing nucleotide cycle form the mechanistic basis for DNA recombination by continuous HJ branch migration. Branch migration allows RuvC to scan DNA until it finds its consensus sequence, where it cleaves and resolves cruciform DNA. The chain is Holliday junction branch migration complex subunit RuvB from Lactococcus lactis subsp. lactis (strain IL1403) (Streptococcus lactis).